The sequence spans 830 residues: Serine/threonine-protein kinase atg1 (830 aa).

Residues 14–307 (YVIRSEIGRG…YDGFFSSIVV (294 aa)) enclose the Protein kinase domain. ATP contacts are provided by residues 20-28 (IGRGSFAIV) and Lys-43. The active-site Proton acceptor is Asp-157. Ser-346 is subject to Phosphoserine. Over residues 448-468 (TQLSNESLTHEQSINGNSPSP) the composition is skewed to polar residues. The disordered stretch occupies residues 448–480 (TQLSNESLTHEQSINGNSPSPNEGVFQGSFSPE).

This sequence belongs to the protein kinase superfamily. Ser/Thr protein kinase family. APG1/unc-51/ULK1 subfamily. In terms of assembly, homodimer. Component of the atg1 kinase complex composed of at least atg1, atg13, atg17 and atg101. Interacts directly with atg13. In terms of processing, phosphorylated. Dephosphorylated under depletion of nitrogen.

The enzyme catalyses L-seryl-[protein] + ATP = O-phospho-L-seryl-[protein] + ADP + H(+). It carries out the reaction L-threonyl-[protein] + ATP = O-phospho-L-threonyl-[protein] + ADP + H(+). Functionally, serine/threonine protein kinase involved in the cytoplasm to vacuole transport (Cvt) and found to be essential in autophagy, where it is required for the formation of autophagosomes. Involved in the clearance of protein aggregates which cannot be efficiently cleared by the proteasome. Required for selective autophagic degradation of the nucleus (nucleophagy) as well as for mitophagy which contributes to regulate mitochondrial quantity and quality by eliminating the mitochondria to a basal level to fulfill cellular energy requirements and preventing excess ROS production. Also involved in endoplasmic reticulum-specific autophagic process, in selective removal of ER-associated degradation (ERAD) substrates. Plays a key role in ATG9 and ATG23 cycling through the pre-autophagosomal structure and is necessary to promote ATG18 binding to ATG9 through phosphorylation of ATG9. Catalyzes phosphorylation of ATG4, decreasing the interaction between ATG4 and ATG8 and impairing deconjugation of PE-conjugated forms of ATG8. Autophagy functions to supply nitrogen and is activated when cells cannot access exogenous nitrogen, thus ensuring that they can adapt and subsequently propagate. Finally, atg13 is also required for glycogen storage during stationary phase and has a role in meiosis and sporulation. This Schizosaccharomyces pombe (strain 972 / ATCC 24843) (Fission yeast) protein is Serine/threonine-protein kinase atg1.